A 538-amino-acid chain; its full sequence is Growth factor receptor-bound protein 14 (538 aa).

Residues 1–73 (MTTSLQDGQS…KAKDLEVQET (73 aa)) are disordered. Residue Thr2 is modified to N-acetylthreonine. The segment covering 54-69 (ATRRGAMDRRKAKDLE) has biased composition (basic and acidic residues). The 87-residue stretch at 104–190 (KKQVIKVYSE…NKLYLRKNYA (87 aa)) folds into the Ras-associating domain. The PH domain maps to 232 to 340 (YPEIHGFLHA…WVTAIRLLKY (109 aa)). Phosphoserine occurs at positions 370 and 373. One can recognise an SH2 domain in the interval 437–533 (WFHHRISRDE…VLPCKLKHYC (97 aa)).

Belongs to the GRB7/10/14 family. Interacts with the cytoplasmic domain of the autophosphorylated insulin receptor, through the SH2 domain. Interacts with GRB14 (via BPS domain); this interaction protects the tyrosines in the activation loop on INSR from dephosphorylation. Binds to the ankyrin repeat region of TNKS2 via its N-terminus. Interacts with activated NRAS. Interacts (via SH2 domain) with TEK/TIE2 (tyrosine phosphorylated). Phosphorylated on serine residues. Phosphorylated on tyrosine residues by TEK/TIE2.

Its subcellular location is the cytoplasm. The protein localises to the endosome membrane. Adapter protein which modulates coupling of cell surface receptor kinases with specific signaling pathways. Binds to, and suppresses signals from, the activated insulin receptor (INSR). Potent inhibitor of insulin-stimulated MAPK3 phosphorylation. Plays a critical role regulating PDPK1 membrane translocation in response to insulin stimulation and serves as an adapter protein to recruit PDPK1 to activated insulin receptor, thus promoting PKB/AKT1 phosphorylation and transduction of the insulin signal. The protein is Growth factor receptor-bound protein 14 (Grb14) of Rattus norvegicus (Rat).